Consider the following 393-residue polypeptide: Phosphoglycerate kinase (393 aa).

Substrate-binding positions include 21–23 (DIN), Arg-36, 59–62 (HFGR), Arg-114, and Arg-147. ATP-binding positions include Lys-197, Glu-319, and 349–352 (GGDT).

This sequence belongs to the phosphoglycerate kinase family. Monomer.

The protein resides in the cytoplasm. It catalyses the reaction (2R)-3-phosphoglycerate + ATP = (2R)-3-phospho-glyceroyl phosphate + ADP. It functions in the pathway carbohydrate degradation; glycolysis; pyruvate from D-glyceraldehyde 3-phosphate: step 2/5. The sequence is that of Phosphoglycerate kinase from Dinoroseobacter shibae (strain DSM 16493 / NCIMB 14021 / DFL 12).